A 107-amino-acid polypeptide reads, in one-letter code: uncharacterized protein (107 aa).

Helical transmembrane passes span tryptophan 5–valine 25 and isoleucine 42–phenylalanine 62. A compositionally biased stretch (basic and acidic residues) spans isoleucine 82–aspartate 92. A disordered region spans residues isoleucine 82 to aspartate 107.

The protein localises to the cell membrane. This is an uncharacterized protein from Bacillus subtilis (strain 168).